Here is a 283-residue protein sequence, read N- to C-terminus: Phospholipid phosphatase 1 (283 aa).

Over 1 to 6 (MFDKTR) the chain is Cytoplasmic. The PDZ-binding; involved in localization to the apical cell membrane motif lies at 5-7 (TRL). Residues 7–27 (LPYVALDVICVLLAGLPFAIL) form a helical membrane-spanning segment. The Extracellular segment spans residues 28 to 53 (TSRHTPFQRGIFCNDDSIKYPYKEDT). Residues 54–74 (IPYALLGGIVIPFCIIVMSIG) traverse the membrane as a helical segment. Topologically, residues 75–88 (ESLSVYFNVLHSNS) are cytoplasmic. Residues 89–109 (FVGNPYIATIYKAVGAFLFGV) traverse the membrane as a helical segment. Over 110 to 164 (SASQSLTDIAKYTIGSLRPHFLAICNPDWSKINCSDGYIEDYICQGNEEKVKEGR) the chain is Extracellular. A phosphatase sequence motif I region spans residues 120–128 (KYTIGSLRP). Asn142 carries N-linked (GlcNAc...) asparagine glycosylation. A helical transmembrane segment spans residues 165–185 (LSFYSGHSSFSMYCMLFVALY). Residues 168-171 (YSGH) are phosphatase sequence motif II. The Proton donors role is filled by His171. Over 186-199 (LQARMKGDWARLLR) the chain is Cytoplasmic. A helical membrane pass occupies residues 200 to 220 (PMLQFGLIAFSIYVGLSRVSD). Residues 216 to 227 (SRVSDYKHHWSD) are phosphatase sequence motif III. The Extracellular segment spans residues 221–229 (YKHHWSDVT). His223 (nucleophile) is an active-site residue. Residues 230-250 (VGLIQGAAMAILVALYVSDFF) form a helical membrane-spanning segment. Over 251–283 (KDTHSYKERKEEDPHTTLHETASSRNYSTNHEP) the chain is Cytoplasmic. Positions 260–283 (KEEDPHTTLHETASSRNYSTNHEP) are disordered. The segment covering 269–283 (HETASSRNYSTNHEP) has biased composition (polar residues).

This sequence belongs to the PA-phosphatase related phosphoesterase family. As to quaternary structure, forms functional homodimers and homooligomers that are not required for substrate recognition and catalytic activity. Can also form heterooligomers with PLPP2 and PLPP3. Post-translationally, N-glycosylated. N-linked sugars are of the complex type. N-glycosylation is not required for the phosphatase activity. As to expression, widely expressed. Highly expressed in kidney and lung. Almost undetectable in brain, heart, bone, muscle or spleen.

It is found in the cell membrane. The protein resides in the apical cell membrane. The protein localises to the membrane raft. Its subcellular location is the membrane. It localises to the caveola. It carries out the reaction a 1,2-diacyl-sn-glycero-3-phosphate + H2O = a 1,2-diacyl-sn-glycerol + phosphate. The enzyme catalyses 1,2-dihexadecanoyl-sn-glycero-3-phosphate + H2O = 1,2-dihexadecanoyl-sn-glycerol + phosphate. It catalyses the reaction 1,2-di-(9Z-octadecenoyl)-sn-glycero-3-phosphate + H2O = 1,2-di-(9Z-octadecenoyl)-sn-glycerol + phosphate. The catalysed reaction is a monoacyl-sn-glycero-3-phosphate + H2O = a monoacylglycerol + phosphate. It carries out the reaction (9Z)-octadecenoyl-sn-glycero-3-phosphate + H2O = (9Z-octadecenoyl)-glycerol + phosphate. The enzyme catalyses a 1-acyl-sn-glycero-3-phosphate + H2O = a 1-acyl-sn-glycerol + phosphate. It catalyses the reaction 1-(9Z-octadecenoyl)-sn-glycero-3-phosphate + H2O = 1-(9Z-octadecenoyl)-sn-glycerol + phosphate. The catalysed reaction is a 1,2-diacyl-sn-glycerol 3-diphosphate + H2O = a 1,2-diacyl-sn-glycero-3-phosphate + phosphate + H(+). It carries out the reaction sphing-4-enine 1-phosphate + H2O = sphing-4-enine + phosphate. The enzyme catalyses an N-acylsphing-4-enine 1-phosphate + H2O = an N-acylsphing-4-enine + phosphate. It catalyses the reaction N-(octanoyl)-sphing-4-enine-1-phosphate + H2O = N-octanoylsphing-4-enine + phosphate. The catalysed reaction is N-(9Z-octadecenoyl)-ethanolamine phosphate + H2O = N-(9Z-octadecenoyl) ethanolamine + phosphate. It carries out the reaction 1-hexadecanoyl-2-(9Z-octadecenoyl)-sn-glycero-3-phosphate + H2O = 1-hexadecanoyl-2-(9Z-octadecenoyl)-sn-glycerol + phosphate. Its pathway is lipid metabolism; phospholipid metabolism. With respect to regulation, magnesium-independent phospholipid phosphatase. Insensitive to N-ethylmaleimide. Its function is as follows. Magnesium-independent phospholipid phosphatase of the plasma membrane that catalyzes the dephosphorylation of a variety of glycerolipid and sphingolipid phosphate esters including phosphatidate/PA, lysophosphatidate/LPA, diacylglycerol pyrophosphate/DGPP, sphingosine 1-phosphate/S1P and ceramide 1-phosphate/C1P. Also acts on N-oleoyl ethanolamine phosphate/N-(9Z-octadecenoyl)-ethanolamine phosphate, a potential physiological compound. Through its extracellular phosphatase activity allows both the hydrolysis and the cellular uptake of these bioactive lipid mediators from the milieu, regulating signal transduction in different cellular processes. It is for instance essential for the extracellular hydrolysis of S1P and subsequent conversion into intracellular S1P. Involved in the regulation of inflammation, platelets activation, cell proliferation and migration among other processes. May also have an intracellular activity to regulate phospholipid-mediated signaling pathways. In Mus musculus (Mouse), this protein is Phospholipid phosphatase 1.